Here is a 101-residue protein sequence, read N- to C-terminus: NADH-quinone oxidoreductase subunit K (101 aa).

Transmembrane regions (helical) follow at residues 2 to 22 (ISLN…LVGV), 29 to 49 (IMLF…LVAI), and 63 to 83 (MFII…LILW).

The protein belongs to the complex I subunit 4L family. NDH-1 is composed of 14 different subunits. Subunits NuoA, H, J, K, L, M, N constitute the membrane sector of the complex.

It localises to the cell inner membrane. The catalysed reaction is a quinone + NADH + 5 H(+)(in) = a quinol + NAD(+) + 4 H(+)(out). Functionally, NDH-1 shuttles electrons from NADH, via FMN and iron-sulfur (Fe-S) centers, to quinones in the respiratory chain. The immediate electron acceptor for the enzyme in this species is believed to be ubiquinone. Couples the redox reaction to proton translocation (for every two electrons transferred, four hydrogen ions are translocated across the cytoplasmic membrane), and thus conserves the redox energy in a proton gradient. The sequence is that of NADH-quinone oxidoreductase subunit K from Campylobacter hominis (strain ATCC BAA-381 / DSM 21671 / CCUG 45161 / LMG 19568 / NCTC 13146 / CH001A).